Consider the following 381-residue polypeptide: Succinyl-diaminopimelate desuccinylase (381 aa).

His-69 serves as a coordination point for Zn(2+). Asp-71 is an active-site residue. Position 103 (Asp-103) interacts with Zn(2+). Glu-137 (proton acceptor) is an active-site residue. Residues Glu-138, Glu-166, and His-355 each coordinate Zn(2+).

Belongs to the peptidase M20A family. DapE subfamily. In terms of assembly, homodimer. Requires Zn(2+) as cofactor. Co(2+) serves as cofactor.

It catalyses the reaction N-succinyl-(2S,6S)-2,6-diaminopimelate + H2O = (2S,6S)-2,6-diaminopimelate + succinate. It functions in the pathway amino-acid biosynthesis; L-lysine biosynthesis via DAP pathway; LL-2,6-diaminopimelate from (S)-tetrahydrodipicolinate (succinylase route): step 3/3. Catalyzes the hydrolysis of N-succinyl-L,L-diaminopimelic acid (SDAP), forming succinate and LL-2,6-diaminopimelate (DAP), an intermediate involved in the bacterial biosynthesis of lysine and meso-diaminopimelic acid, an essential component of bacterial cell walls. This chain is Succinyl-diaminopimelate desuccinylase, found in Rickettsia rickettsii (strain Iowa).